Here is a 211-residue protein sequence, read N- to C-terminus: Uracil phosphoribosyltransferase (211 aa).

Residues Arg-77, Arg-102, and 129–137 (DPMLATGGS) each bind 5-phospho-alpha-D-ribose 1-diphosphate. Residues Ile-192 and 197–199 (GDA) contribute to the uracil site. Asp-198 contacts 5-phospho-alpha-D-ribose 1-diphosphate.

Belongs to the UPRTase family. It depends on Mg(2+) as a cofactor.

The enzyme catalyses UMP + diphosphate = 5-phospho-alpha-D-ribose 1-diphosphate + uracil. It participates in pyrimidine metabolism; UMP biosynthesis via salvage pathway; UMP from uracil: step 1/1. Allosterically activated by GTP. Its function is as follows. Catalyzes the conversion of uracil and 5-phospho-alpha-D-ribose 1-diphosphate (PRPP) to UMP and diphosphate. The chain is Uracil phosphoribosyltransferase from Corynebacterium efficiens (strain DSM 44549 / YS-314 / AJ 12310 / JCM 11189 / NBRC 100395).